Here is a 438-residue protein sequence, read N- to C-terminus: Aspartate--tRNA(Asp/Asn) ligase (438 aa).

Glu176 is an L-aspartate binding site. Positions 198 to 201 (QLYK) are aspartate. Arg220 contacts L-aspartate. Residues 220–222 (RAE), 228–230 (RHL), and Glu361 each bind ATP. Mg(2+) is bound by residues Glu361 and Ser364. L-aspartate-binding residues include Ser364 and Arg368. Residue 409–412 (GIER) coordinates ATP.

It belongs to the class-II aminoacyl-tRNA synthetase family. Type 2 subfamily. In terms of assembly, homodimer. Mg(2+) is required as a cofactor.

The protein localises to the cytoplasm. The catalysed reaction is tRNA(Asx) + L-aspartate + ATP = L-aspartyl-tRNA(Asx) + AMP + diphosphate. In terms of biological role, aspartyl-tRNA synthetase with relaxed tRNA specificity since it is able to aspartylate not only its cognate tRNA(Asp) but also tRNA(Asn). Reaction proceeds in two steps: L-aspartate is first activated by ATP to form Asp-AMP and then transferred to the acceptor end of tRNA(Asp/Asn). This Methanococcus aeolicus (strain ATCC BAA-1280 / DSM 17508 / OCM 812 / Nankai-3) protein is Aspartate--tRNA(Asp/Asn) ligase.